A 102-amino-acid polypeptide reads, in one-letter code: Complement inhibitor RaCI6 (102 aa).

Positions 1-24 (MAALNGLVLLLLTISAMFISECYS) are cleaved as a signal peptide. Disulfide bonds link Cys37/Cys61 and Cys42/Cys63.

Belongs to the RaCI family. In terms of tissue distribution, expressed in salivary glands.

The protein localises to the secreted. Its function is as follows. Complement inhibitor. Prevents complement-mediated C5 activation by binding to C5. Binds C5 at a different binding site than the other tick complement inhibitors OmCI and CirpT1, and the drug eculizumab. The protein is Complement inhibitor RaCI6 of Dermacentor andersoni (Rocky mountain wood tick).